Here is a 532-residue protein sequence, read N- to C-terminus: CTP synthase (532 aa).

Positions 1–267 (MAKFIFVTGG…QDIIIEQLQL (267 aa)) are amidoligase domain. Ser-13 is a CTP binding site. A UTP-binding site is contributed by Ser-13. Residue 14–19 (GLGKGI) participates in ATP binding. Tyr-54 serves as a coordination point for L-glutamine. Asp-71 contacts ATP. Residues Asp-71 and Glu-141 each contribute to the Mg(2+) site. Residues 148 to 150 (DIE), 188 to 193 (KTKPIQ), and Lys-224 each bind CTP. Residues 188–193 (KTKPIQ) and Lys-224 each bind UTP. Residues 292-532 (EISFVGKYIE…FIKAIIENNK (241 aa)) form the Glutamine amidotransferase type-1 domain. Position 354 (Gly-354) interacts with L-glutamine. Cys-381 acts as the Nucleophile; for glutamine hydrolysis in catalysis. L-glutamine contacts are provided by residues 382-385 (LGMQ), Glu-405, and Arg-461. Residues His-506 and Glu-508 contribute to the active site.

It belongs to the CTP synthase family. In terms of assembly, homotetramer.

The catalysed reaction is UTP + L-glutamine + ATP + H2O = CTP + L-glutamate + ADP + phosphate + 2 H(+). It carries out the reaction L-glutamine + H2O = L-glutamate + NH4(+). The enzyme catalyses UTP + NH4(+) + ATP = CTP + ADP + phosphate + 2 H(+). The protein operates within pyrimidine metabolism; CTP biosynthesis via de novo pathway; CTP from UDP: step 2/2. Its activity is regulated as follows. Allosterically activated by GTP, when glutamine is the substrate; GTP has no effect on the reaction when ammonia is the substrate. The allosteric effector GTP functions by stabilizing the protein conformation that binds the tetrahedral intermediate(s) formed during glutamine hydrolysis. Inhibited by the product CTP, via allosteric rather than competitive inhibition. Functionally, catalyzes the ATP-dependent amination of UTP to CTP with either L-glutamine or ammonia as the source of nitrogen. Regulates intracellular CTP levels through interactions with the four ribonucleotide triphosphates. The protein is CTP synthase of Mycoplasma capricolum subsp. capricolum (strain California kid / ATCC 27343 / NCTC 10154).